The primary structure comprises 284 residues: 4-diphosphocytidyl-2-C-methyl-D-erythritol kinase (284 aa).

Lysine 22 is an active-site residue. ATP is bound at residue 104–114; sequence PVGAGLGGASS. The active site involves aspartate 146.

The protein belongs to the GHMP kinase family. IspE subfamily.

It catalyses the reaction 4-CDP-2-C-methyl-D-erythritol + ATP = 4-CDP-2-C-methyl-D-erythritol 2-phosphate + ADP + H(+). Its pathway is isoprenoid biosynthesis; isopentenyl diphosphate biosynthesis via DXP pathway; isopentenyl diphosphate from 1-deoxy-D-xylulose 5-phosphate: step 3/6. Functionally, catalyzes the phosphorylation of the position 2 hydroxy group of 4-diphosphocytidyl-2C-methyl-D-erythritol. The sequence is that of 4-diphosphocytidyl-2-C-methyl-D-erythritol kinase from Hydrogenobaculum sp. (strain Y04AAS1).